The sequence spans 507 residues: Efflux pump ustT (507 aa).

11 helical membrane-spanning segments follow: residues 59-79 (IAVV…IIVA), 146-166 (LLIA…VTWF), 180-200 (IWQL…AMIA), 216-236 (HAAV…LANF), 240-260 (IPVF…YVVV), 316-336 (VLLI…SGIT), 359-379 (AGVN…ILVK), 398-418 (VCLI…TLVF), 421-441 (TVFA…TGMV), 449-469 (VFTG…PMLA), and 481-501 (IWVG…LGAI).

It belongs to the major facilitator superfamily.

The protein resides in the cell membrane. The protein operates within mycotoxin biosynthesis. Its function is as follows. Efflux pump; part of the gene cluster that mediates the biosynthesis of the secondary metabolite ustiloxin B, an antimitotic tetrapeptide. Probably involved in self-resistance through the export of ustiloxin B. This Aspergillus flavus (strain ATCC 200026 / FGSC A1120 / IAM 13836 / NRRL 3357 / JCM 12722 / SRRC 167) protein is Efflux pump ustT.